The sequence spans 241 residues: MAGHSKWANIKHKKAAQDAKRGKIFTRLIKEITVAARLGGGDPNSNPRLRLAMDKAFGHNMPKDNVERAIKRGCGELEGVNYEEIRYEGYGISGAAVMVDCMTDNRTRTVAAVRHAFTKHGGNLGTDGSVAYLFKHCGQLLFAPGVGEAQLLEAALEAGAEDVISNDDGSLEVITGPDTFVSVRDTLEKAGFKAELAEVTWKPENEVLLQGDDAVKMQKLLDALEDIDDVQDVYTSAVLDT.

Belongs to the TACO1 family.

The protein resides in the cytoplasm. This is Probable transcriptional regulatory protein NE0210 from Nitrosomonas europaea (strain ATCC 19718 / CIP 103999 / KCTC 2705 / NBRC 14298).